Here is a 145-residue protein sequence, read N- to C-terminus: UPF0179 protein MmarC6_0993 (145 aa).

Belongs to the UPF0179 family.

The protein is UPF0179 protein MmarC6_0993 of Methanococcus maripaludis (strain C6 / ATCC BAA-1332).